The chain runs to 91 residues: uncharacterized protein (91 aa).

Residues 50–70 (FGFFGGPFIGGLAGGLIGSAL) traverse the membrane as a helical segment.

Its subcellular location is the cell membrane. This is an uncharacterized protein from Bacillus subtilis (strain 168).